Reading from the N-terminus, the 274-residue chain is Protein STAY-GREEN, chloroplastic (274 aa).

Residues 1–48 (MAAATSTMSLLPPITQQQRWHAADSLVVLASRCHNSRRRRRCRYVVPR) constitute a chloroplast transit peptide.

The protein belongs to the staygreen family. Interacts with LHCII complex. As to expression, expressed in leaves, roots and developing seeds.

The protein resides in the plastid. The protein localises to the chloroplast membrane. It localises to the chloroplast stroma. In terms of biological role, involved in the disassembling mechanism of the intact light-harvesting complex of photosystem II (LHCII) in the thylakoid membranes. Required to trigger chlorophyll degradation during natural and dark-induced leaf senescence. The sequence is that of Protein STAY-GREEN, chloroplastic (SGR) from Oryza sativa subsp. japonica (Rice).